The chain runs to 556 residues: Arginine--tRNA ligase (556 aa).

Residues 132–142 (ANPTGNLHLGH) carry the 'HIGH' region motif.

This sequence belongs to the class-I aminoacyl-tRNA synthetase family. In terms of assembly, monomer.

The protein resides in the cytoplasm. It carries out the reaction tRNA(Arg) + L-arginine + ATP = L-arginyl-tRNA(Arg) + AMP + diphosphate. The sequence is that of Arginine--tRNA ligase from Bacillus licheniformis (strain ATCC 14580 / DSM 13 / JCM 2505 / CCUG 7422 / NBRC 12200 / NCIMB 9375 / NCTC 10341 / NRRL NRS-1264 / Gibson 46).